Consider the following 282-residue polypeptide: sn-glycerol-3-phosphate transport system permease protein UgpE (282 aa).

Transmembrane regions (helical) follow at residues 14 to 34 (LILI…FVAS), 86 to 106 (MAIA…IVFF), 112 to 132 (MFFF…RILP), 146 to 168 (YAGL…QFFL), 201 to 221 (IAAL…WPLL), and 248 to 268 (WNYV…VVVL). Residues 78-269 (LWNSFVVAMA…IPPILVVVLM (192 aa)) form the ABC transmembrane type-1 domain.

This sequence belongs to the binding-protein-dependent transport system permease family. The complex is composed of two ATP-binding proteins (UgpC), two transmembrane proteins (UgpA and UgpE) and a solute-binding protein (UgpB).

It localises to the cell inner membrane. Part of the ABC transporter complex UgpBAEC involved in sn-glycerol-3-phosphate (G3P) import. Probably responsible for the translocation of the substrate across the membrane. This Brucella melitensis biotype 1 (strain ATCC 23456 / CCUG 17765 / NCTC 10094 / 16M) protein is sn-glycerol-3-phosphate transport system permease protein UgpE (ugpE).